Reading from the N-terminus, the 162-residue chain is Shikimate kinase (162 aa).

ATP is bound at residue 10–15; sequence GAGKST. Ser14 contacts Mg(2+). The substrate site is built by Asp28, Arg52, and Gly73. Arg113 provides a ligand contact to ATP. Arg129 is a binding site for substrate.

The protein belongs to the shikimate kinase family. Monomer. Requires Mg(2+) as cofactor.

It is found in the cytoplasm. It carries out the reaction shikimate + ATP = 3-phosphoshikimate + ADP + H(+). The protein operates within metabolic intermediate biosynthesis; chorismate biosynthesis; chorismate from D-erythrose 4-phosphate and phosphoenolpyruvate: step 5/7. Its function is as follows. Catalyzes the specific phosphorylation of the 3-hydroxyl group of shikimic acid using ATP as a cosubstrate. The protein is Shikimate kinase of Lactococcus lactis subsp. cremoris (strain MG1363).